The primary structure comprises 766 residues: 1,4-alpha-glucan branching enzyme GlgB (766 aa).

The active-site Nucleophile is the Asp-431. Glu-484 serves as the catalytic Proton donor.

It belongs to the glycosyl hydrolase 13 family. GlgB subfamily. Monomer.

The catalysed reaction is Transfers a segment of a (1-&gt;4)-alpha-D-glucan chain to a primary hydroxy group in a similar glucan chain.. It participates in glycan biosynthesis; glycogen biosynthesis. Catalyzes the formation of the alpha-1,6-glucosidic linkages in glycogen by scission of a 1,4-alpha-linked oligosaccharide from growing alpha-1,4-glucan chains and the subsequent attachment of the oligosaccharide to the alpha-1,6 position. The sequence is that of 1,4-alpha-glucan branching enzyme GlgB from Thermosynechococcus vestitus (strain NIES-2133 / IAM M-273 / BP-1).